The sequence spans 57 residues: U13-myrmicitoxin-Mri1a (57 aa).

A signal peptide spans 1–23 (MKIIHVLLLVAVVAITMSPSIMA). Positions 24–29 (ESVAEA) are excised as a propeptide. Glutamic acid 1-amide is present on Glu-56.

Expressed by the venom gland.

The protein localises to the secreted. In terms of biological role, induces paralysis 1 hour after injection into insects (blowfly L.caesar) but does not appear to be lethal. This chain is U13-myrmicitoxin-Mri1a, found in Manica rubida (European giant red ant).